A 131-amino-acid polypeptide reads, in one-letter code: Small ribosomal subunit protein uS8 (131 aa).

The protein belongs to the universal ribosomal protein uS8 family. Part of the 30S ribosomal subunit. Contacts proteins S5 and S12.

One of the primary rRNA binding proteins, it binds directly to 16S rRNA central domain where it helps coordinate assembly of the platform of the 30S subunit. In Clostridium novyi (strain NT), this protein is Small ribosomal subunit protein uS8.